The primary structure comprises 967 residues: MPTQSVDSVKAVRVRPFSQREKNSGSKCVISMHSRTTTTTQDPKNPEHVKTFTFDLAYWSHNGFQRDKDGVLISADPSRKFAGQRDVFHDLGRGILDSAWQGYNATLLAYGQTGSGKSYSMIGFGCKQGIIPTVCEELFRAIENQGRNQEHQVMFSMLEIYKEIIRDLLSRTKKPGGLRIREDQQLGFYVEGLKSVPCENYAQIERLMEQGTKIRTTASTNMNASSSRSHLVITIQFKQVFLDRDLTKQSSINLVDLARSERQKSSGSEGDRLREGSCVNLSLTNLGSVISVLADAAMGKKVLHIPYRDSVLTKLLQSALGGNSRTALVAAVSPADICYEETLSTLRYAERERKIRNRAVANTWTLMRKSRAENSKLLPMMTFPHLLNLSEDPQLTRVLKYFIQAGTQPAPCPRPALSPPHPALRISDKHASFTNADGKVTVTPHSKCKVAVNGVPITTRTKLQHLDRLILGSNSTYLYVGFPSEWGSEDLSRFDYDFFQLERAAAEGASADKLGAADGGDGKAGPSVLAAFQDYIKLMPLVSEANQMSEEPKKGLNMELKVKNLASSDSRGYDLQKEVLVKVTHHGSHEVWIWSKAKFINRKFLMQELYQRFLDGDHGPVARDDDPFWDPVEVVRLGSAHIWLQSLAYCMKLEEQVEFLNCDGLEEAVLHTCIAPCSPTGQTHGEEDVVIDPLELLGKRMDFQIHIVRCLGVNWMKEDAKRGTQIGYRIYDLPNTIYTKPVWKSVNPQIEETVQFAALTASQEFLNYLRTNALIVDLWGLQEGCTELSCSQLGLMVTGEGHILVDTKKISTVKDISQAASNQIPELYLKLLKLEQETEPLRNINRALREENVLLKASLAKTASGQAPKPSNTLKISGMTAQLPSAGEMSQMCTQQAGSDRELAKALKVFYQSMNTARGQLFRLRRHQPPEVDQMLRPFIHQRSQMFKDLGDLRESSLWTLKMTLLL.

The Kinesin motor domain occupies 7-355 (DSVKAVRVRP…LRYAERERKI (349 aa)). 111 to 118 (GQTGSGKS) contributes to the ATP binding site. One can recognise an FHA domain in the interval 410-472 (APCPRPALSP…LQHLDRLILG (63 aa)). The stretch at 822-851 (NQIPELYLKLLKLEQETEPLRNINRALREE) forms a coiled coil.

Belongs to the TRAFAC class myosin-kinesin ATPase superfamily. Kinesin family.

It is found in the mitochondrion membrane. Functionally, microtubule-dependent motor protein required for mitochondrion morphology and transport of mitochondria in neuronal cells. The chain is Kinesin-like protein KIF28P (KIF28P) from Homo sapiens (Human).